The chain runs to 567 residues: Multidrug and toxin extrusion protein 1 (567 aa).

The residue at position 1 (methionine 1) is an N-acetylmethionine. The Cytoplasmic portion of the chain corresponds to 1 to 37 (MERTEESAPGPGGADAASERRGLRCLLLPGFLEELRA). Position 18 is a phosphoserine (serine 18). A helical membrane pass occupies residues 38-58 (LLVLAGPAFLAQLMMFLISFI). Topologically, residues 59 to 72 (SSVFCGHLGKLELD) are extracellular. The helical transmembrane segment at 73–93 (AVTLAIAVINVTGISVGHGLS) threads the bilayer. Topologically, residues 94–120 (SACDTLISQTYGSQNLKHVGVILQRGT) are cytoplasmic. A helical transmembrane segment spans residues 121–141 (LILLLCCFPCWALFINTEQIL). Residues 142–152 (LLFRQDPDVSR) lie on the Extracellular side of the membrane. Residues 153 to 173 (LTQTYVMIFIPALPAAFLYTL) form a helical membrane-spanning segment. Over 174-187 (QVKYLLNQGIVLPQ) the chain is Cytoplasmic. The helical transmembrane segment at 188–208 (IMTGIAANLVNALANYVFLYH) threads the bilayer. Residues 209 to 216 (LHLGVMGS) lie on the Extracellular side of the membrane. The helical transmembrane segment at 217–237 (ALANTISQFALAIFLFLYILW) threads the bilayer. Residues 238 to 257 (RRLHQATWGGWSWECLQDWA) lie on the Cytoplasmic side of the membrane. A helical transmembrane segment spans residues 258–277 (SFLRLAIPSMLMLCIEWWAY). Topologically, residues 278-295 (EVGSFLSGILGMVELGAQ) are extracellular. A helical transmembrane segment spans residues 296-316 (SITYELAIIVYMIPSGFSVAA). Residues 317–336 (NVRVGNALGAGNIDQAKKSS) are Cytoplasmic-facing. The helical transmembrane segment at 337-357 (AISLIVTELFAVTFCVLLLGC) threads the bilayer. Over 358–370 (KDLVGYIFTTDRD) the chain is Extracellular. Residues 371–391 (IVALVAQVIPIYAVSHLFEGL) form a helical membrane-spanning segment. Residues 392 to 408 (ACTCGGILRGTGNQKVG) lie on the Cytoplasmic side of the membrane. Residues 409 to 429 (AIVNAIGYYVIGLPIGIALMF) traverse the membrane as a helical segment. The Extracellular portion of the chain corresponds to 430–437 (AAKLGVIG). The helical transmembrane segment at 438–458 (LWSGIIICTTCQTTCFLAFIA) threads the bilayer. At 459-543 (RLNWKRACQQ…LSGKQLALRR (85 aa)) the chain is on the cytoplasmic side. The helical transmembrane segment at 544 to 564 (GLLLLGVVLVLVGGILVRVYI) threads the bilayer. Topologically, residues 565-567 (RIE) are extracellular.

Belongs to the multi antimicrobial extrusion (MATE) (TC 2.A.66.1) family. Predominantly expressed in kidney and liver. Also expressed in various cells, including brain glia-like cells and capillaries, pancreatic duct cells, urinary bladder epithelium, adrenal gland cortex, heart, stomach, small intestine, thyroid gland, testes, alpha cells of the islets of Langerhans, Leydig cells, and vitamin A-storing Ito cells. Expressed in heart, stomach, small intestine, bladder, thyroid gland, adrenal gland and testes (at protein level).

The protein resides in the cell membrane. Its subcellular location is the apical cell membrane. The catalysed reaction is thiamine(out) + H(+)(in) = thiamine(in) + H(+)(out). It carries out the reaction estrone 3-sulfate(in) + H(+)(out) = estrone 3-sulfate(out) + H(+)(in). The enzyme catalyses creatinine(in) + H(+)(out) = creatinine(out) + H(+)(in). It catalyses the reaction agmatine(in) + H(+)(out) = agmatine(out) + H(+)(in). Its function is as follows. Multidrug efflux pump that functions as a H(+)/organic cation antiporter. Plays a physiological role in the excretion of cationic compounds including endogenous metabolites, drugs, toxins through the kidney and liver, into urine and bile respectively. Mediates the efflux of endogenous compounds such as creatinine, vitamin B1/thiamine, agmatine and estrone-3-sulfate. May also contribute to regulate the transport of cationic compounds in testis across the blood-testis-barrier. This chain is Multidrug and toxin extrusion protein 1 (Slc47a1), found in Mus musculus (Mouse).